The chain runs to 240 residues: Protein OPG176 (240 aa).

Belongs to the orthopoxvirus OPG176 family. Tetramer. Interacts with host MYD88, TRF4, TICAM2 and MAL.

In terms of biological role, BCL2-like protein which disrupts the host immune response by inhibiting the TLR4 signaling pathway leading to NF-kappa-B activation. Acts close to the plasma membrane and targets several host TIR-domain containing adapter proteins including MYD88, TIRAP, TRIF and TICAM2. In turn, blocks the host NF-kappa-B and TRIF-mediated IRF3 activation. The chain is Protein OPG176 (OPG176) from Bos taurus (Bovine).